A 145-amino-acid chain; its full sequence is Ribonuclease P protein component (145 aa).

Positions 119–145 (PLPAAPGTMPPARTVRPSSPSPTEPEL) are disordered.

The protein belongs to the RnpA family. As to quaternary structure, consists of a catalytic RNA component (M1 or rnpB) and a protein subunit.

The catalysed reaction is Endonucleolytic cleavage of RNA, removing 5'-extranucleotides from tRNA precursor.. RNaseP catalyzes the removal of the 5'-leader sequence from pre-tRNA to produce the mature 5'-terminus. It can also cleave other RNA substrates such as 4.5S RNA. The protein component plays an auxiliary but essential role in vivo by binding to the 5'-leader sequence and broadening the substrate specificity of the ribozyme. In Xanthomonas euvesicatoria pv. vesicatoria (strain 85-10) (Xanthomonas campestris pv. vesicatoria), this protein is Ribonuclease P protein component.